Here is a 911-residue protein sequence, read N- to C-terminus: Protein translocase subunit SecA (911 aa).

ATP is bound by residues Gln87, 105–109 (GEGKT), and Asp510. Zn(2+)-binding residues include Cys896, Cys898, Cys907, and His908.

Belongs to the SecA family. As to quaternary structure, monomer and homodimer. Part of the essential Sec protein translocation apparatus which comprises SecA, SecYEG and auxiliary proteins SecDF-YajC and YidC. Zn(2+) is required as a cofactor.

It localises to the cell inner membrane. The protein resides in the cytoplasm. The enzyme catalyses ATP + H2O + cellular proteinSide 1 = ADP + phosphate + cellular proteinSide 2.. Its function is as follows. Part of the Sec protein translocase complex. Interacts with the SecYEG preprotein conducting channel. Has a central role in coupling the hydrolysis of ATP to the transfer of proteins into and across the cell membrane, serving both as a receptor for the preprotein-SecB complex and as an ATP-driven molecular motor driving the stepwise translocation of polypeptide chains across the membrane. This chain is Protein translocase subunit SecA, found in Acinetobacter baumannii (strain SDF).